Reading from the N-terminus, the 145-residue chain is MRTRAGPSKQSRDNLGLRVDFSFFMPAYVGVLSRLCRRGRVCAGPSRARDRGCDGNCALLRFRNEGVRPIGARGRGRTYTKGGSSRSPASWAEQGRPPFTLSVSGTVLCLGRGLPAVRKAGFCRRVSVHGYVAFGTYGKGTYGEG.

The tract at residues 71–95 (GARGRGRTYTKGGSSRSPASWAEQG) is disordered.

This is an uncharacterized protein from Homo sapiens (Human).